Here is a 94-residue protein sequence, read N- to C-terminus: Co-chaperonin GroES (94 aa).

It belongs to the GroES chaperonin family. Heptamer of 7 subunits arranged in a ring. Interacts with the chaperonin GroEL.

It is found in the cytoplasm. In terms of biological role, together with the chaperonin GroEL, plays an essential role in assisting protein folding. The GroEL-GroES system forms a nano-cage that allows encapsulation of the non-native substrate proteins and provides a physical environment optimized to promote and accelerate protein folding. GroES binds to the apical surface of the GroEL ring, thereby capping the opening of the GroEL channel. In Geobacillus thermodenitrificans (strain NG80-2), this protein is Co-chaperonin GroES.